A 359-amino-acid chain; its full sequence is Glycerol-1-phosphate dehydrogenase [NAD(P)+] (359 aa).

Residues 107-111 (GRVID) and 129-132 (TAAS) each bind NAD(+). Residue aspartate 134 participates in substrate binding. Residue serine 138 participates in NAD(+) binding. Aspartate 181 contributes to the substrate binding site. 2 residues coordinate Zn(2+): aspartate 181 and histidine 261. A substrate-binding site is contributed by histidine 265. Histidine 277 contacts Zn(2+).

It belongs to the glycerol-1-phosphate dehydrogenase family. It depends on Zn(2+) as a cofactor.

Its subcellular location is the cytoplasm. It catalyses the reaction sn-glycerol 1-phosphate + NAD(+) = dihydroxyacetone phosphate + NADH + H(+). The catalysed reaction is sn-glycerol 1-phosphate + NADP(+) = dihydroxyacetone phosphate + NADPH + H(+). It participates in membrane lipid metabolism; glycerophospholipid metabolism. Catalyzes the NAD(P)H-dependent reduction of dihydroxyacetonephosphate (DHAP or glycerone phosphate) to glycerol 1-phosphate (G1P). The G1P thus generated is used as the glycerophosphate backbone of phospholipids in the cellular membranes of Archaea. This Methanoregula boonei (strain DSM 21154 / JCM 14090 / 6A8) protein is Glycerol-1-phosphate dehydrogenase [NAD(P)+].